The following is a 220-amino-acid chain: Probable GTP-binding protein EngB (220 aa).

The region spanning 31-205 (AGVEIAFAGR…LGILNEWCHP (175 aa)) is the EngB-type G domain. GTP contacts are provided by residues 39–46 (GRSNAGKS), 66–70 (GRTQL), 84–87 (DLPG), 151–154 (TKAD), and 184–186 (FSS). Serine 46 and threonine 68 together coordinate Mg(2+).

The protein belongs to the TRAFAC class TrmE-Era-EngA-EngB-Septin-like GTPase superfamily. EngB GTPase family. Mg(2+) serves as cofactor.

Necessary for normal cell division and for the maintenance of normal septation. This chain is Probable GTP-binding protein EngB, found in Shewanella sediminis (strain HAW-EB3).